The following is a 313-amino-acid chain: Fe-S cluster assembly protein dre2 (313 aa).

Disordered regions lie at residues 1–25 and 151–187; these read MSIT…SQKR and GRKK…AQNN. Residues 20–145 are N-terminal SAM-like domain; it reads NGSQKRNLLL…FEKPVQEAAV (126 aa). Residues 146–203 form a linker region; it reads PLKLGGRKKKDKTNGVNGVQNGVATNGASTNGVGMFDPAQNNDDELIDEDALLSDDDL. Over residues 159-177 the composition is skewed to polar residues; sequence NGVNGVQNGVATNGASTNG. [2Fe-2S] cluster-binding residues include C213, C225, C228, and C230. The tract at residues 213 to 230 is fe-S binding site A; it reads CVPETAKKRRRPCKDCTC. 4 residues coordinate [4Fe-4S] cluster: C276, C279, C287, and C290. 2 consecutive short sequence motifs (cx2C motif) follow at residues 276–279 and 287–290; these read CNSC and CSSC. The interval 276 to 290 is fe-S binding site B; it reads CNSCSLGDAFRCSSC.

Belongs to the anamorsin family. As to quaternary structure, monomer. Interacts with tah18. Interacts with mia40. Requires [2Fe-2S] cluster as cofactor. [4Fe-4S] cluster serves as cofactor.

It localises to the cytoplasm. Its subcellular location is the mitochondrion intermembrane space. Component of the cytosolic iron-sulfur (Fe-S) protein assembly (CIA) machinery required for the maturation of extramitochondrial Fe-S proteins. Part of an electron transfer chain functioning in an early step of cytosolic Fe-S biogenesis, facilitating the de novo assembly of a [4Fe-4S] cluster on the scaffold complex cfd1-nbp35. Electrons are transferred to dre2 from NADPH via the FAD- and FMN-containing protein tah18. Tah18-dre2 are also required for the assembly of the diferric tyrosyl radical cofactor of ribonucleotide reductase (RNR), probably by providing electrons for reduction during radical cofactor maturation in the catalytic small subunit rnr2. This is Fe-S cluster assembly protein dre2 from Aspergillus flavus (strain ATCC 200026 / FGSC A1120 / IAM 13836 / NRRL 3357 / JCM 12722 / SRRC 167).